Reading from the N-terminus, the 208-residue chain is F-box/kelch-repeat protein At2g43270 (208 aa).

The F-box domain occupies 1-44 (MIYVVPDLLEEIFLGLPLKSILRFKTVSKQWRSILESKSFAERR). Residues 149 to 200 (RDKFNGSYKVVRMCFSPVEKCEVLDVETGEWSELNPPPNDIDVGRKSVCVNG) form a Kelch repeat.

The protein is F-box/kelch-repeat protein At2g43270 of Arabidopsis thaliana (Mouse-ear cress).